Consider the following 91-residue polypeptide: uncharacterized protein (91 aa).

This is an uncharacterized protein from Rickettsia conorii (strain ATCC VR-613 / Malish 7).